The primary structure comprises 501 residues: Probable cytosol aminopeptidase (501 aa).

Lysine 268 and aspartate 273 together coordinate Mn(2+). Lysine 280 is a catalytic residue. The Mn(2+) site is built by aspartate 291, aspartate 350, and glutamate 352. Arginine 354 is a catalytic residue.

The protein belongs to the peptidase M17 family. Mn(2+) is required as a cofactor.

It is found in the cytoplasm. It catalyses the reaction Release of an N-terminal amino acid, Xaa-|-Yaa-, in which Xaa is preferably Leu, but may be other amino acids including Pro although not Arg or Lys, and Yaa may be Pro. Amino acid amides and methyl esters are also readily hydrolyzed, but rates on arylamides are exceedingly low.. The enzyme catalyses Release of an N-terminal amino acid, preferentially leucine, but not glutamic or aspartic acids.. Functionally, presumably involved in the processing and regular turnover of intracellular proteins. Catalyzes the removal of unsubstituted N-terminal amino acids from various peptides. The polypeptide is Probable cytosol aminopeptidase (Colwellia psychrerythraea (strain 34H / ATCC BAA-681) (Vibrio psychroerythus)).